A 401-amino-acid polypeptide reads, in one-letter code: Imidazolonepropionase (401 aa).

Fe(3+) is bound by residues H66 and H68. Positions 66 and 68 each coordinate Zn(2+). Residues R75, Y138, and H171 each coordinate 4-imidazolone-5-propanoate. Residue Y138 participates in N-formimidoyl-L-glutamate binding. H236 provides a ligand contact to Fe(3+). H236 lines the Zn(2+) pocket. Residue Q239 participates in 4-imidazolone-5-propanoate binding. D311 contacts Fe(3+). Residue D311 participates in Zn(2+) binding. N-formimidoyl-L-glutamate contacts are provided by N313 and G315. Residue T316 coordinates 4-imidazolone-5-propanoate.

The protein belongs to the metallo-dependent hydrolases superfamily. HutI family. The cofactor is Zn(2+). It depends on Fe(3+) as a cofactor.

The protein localises to the cytoplasm. The catalysed reaction is 4-imidazolone-5-propanoate + H2O = N-formimidoyl-L-glutamate. It participates in amino-acid degradation; L-histidine degradation into L-glutamate; N-formimidoyl-L-glutamate from L-histidine: step 3/3. In terms of biological role, catalyzes the hydrolytic cleavage of the carbon-nitrogen bond in imidazolone-5-propanoate to yield N-formimidoyl-L-glutamate. It is the third step in the universal histidine degradation pathway. The protein is Imidazolonepropionase of Acinetobacter baumannii (strain AB0057).